The sequence spans 146 residues: Ubiquitin-conjugating enzyme E2 variant 1D (146 aa).

The region spanning 13-146 is the UBC core domain; the sequence is PRNFRLLEEL…LVQPPEGTCF (134 aa).

It belongs to the ubiquitin-conjugating enzyme family. As to quaternary structure, heterodimer with UBC35 or UBC36. Expressed in roots, shoots, leaves, stems, flowers and pollen.

In terms of biological role, has no ubiquitin ligase activity on its own. The heterodimer with UBC catalyzes the synthesis of non-canonical poly-ubiquitin chains that are linked through 'Lys-63'. This type of poly-ubiquitination does not lead to protein degradation by the proteasome. Mediates transcriptional activation of target genes. May play a role in the control of progress through the cell cycle and differentiation. Involved in the error-free DNA repair pathway and contributes to the survival of cells after DNA damage. The chain is Ubiquitin-conjugating enzyme E2 variant 1D (UEV1D) from Arabidopsis thaliana (Mouse-ear cress).